The primary structure comprises 420 residues: Serine hydroxymethyltransferase (420 aa).

(6S)-5,6,7,8-tetrahydrofolate-binding positions include Leu121 and 125-127; that span reads GHL. Position 229 is an N6-(pyridoxal phosphate)lysine (Lys229). Residue 355 to 357 participates in (6S)-5,6,7,8-tetrahydrofolate binding; the sequence is SPF.

It belongs to the SHMT family. In terms of assembly, homodimer. The cofactor is pyridoxal 5'-phosphate.

The protein resides in the cytoplasm. The enzyme catalyses (6R)-5,10-methylene-5,6,7,8-tetrahydrofolate + glycine + H2O = (6S)-5,6,7,8-tetrahydrofolate + L-serine. It functions in the pathway one-carbon metabolism; tetrahydrofolate interconversion. Its pathway is amino-acid biosynthesis; glycine biosynthesis; glycine from L-serine: step 1/1. Its function is as follows. Catalyzes the reversible interconversion of serine and glycine with tetrahydrofolate (THF) serving as the one-carbon carrier. This reaction serves as the major source of one-carbon groups required for the biosynthesis of purines, thymidylate, methionine, and other important biomolecules. Also exhibits THF-independent aldolase activity toward beta-hydroxyamino acids, producing glycine and aldehydes, via a retro-aldol mechanism. The protein is Serine hydroxymethyltransferase of Chromohalobacter salexigens (strain ATCC BAA-138 / DSM 3043 / CIP 106854 / NCIMB 13768 / 1H11).